The following is a 1033-amino-acid chain: uncharacterized protein (1033 aa).

Coiled-coil stretches lie at residues 212 to 326 (EIFK…KMNN), 405 to 582 (ILNN…LYKF), 615 to 771 (LEKE…LKLN), and 797 to 1019 (KMKI…NIDN).

This is an uncharacterized protein from Plasmodium falciparum (isolate 3D7).